The primary structure comprises 132 residues: MTNVFTIDAFREEVKKKYAPVLIGLSDDVTVELKPLLKLGQKAREAVVEVFKEFADIPDLEEDDDDELVDEYSLQVCDIIAKAFRLIATKPKKLIAALDEEPDPRIRAELYAAVLNTWKRETQLGEAAPSPS.

It belongs to the L5likevirus tail assembly protein family. In terms of assembly, interacts with tail assembly protein Gp25 and tape measure protein.

In terms of biological role, promotes tail assembly by creating a scaffold for the tail tube proteins. The tail assembly proteins Gp24 and Gp25 would wrap the linear tape measure protein to create a tail assembly scaffold. It would allow polymerization of tail tube protein during which Gp24 and Gp25 are released and therefore are absent from the mature virion. The tail assembly protein Gp25 is produced by a rare -1 ribosomal frameshift. The ratio Gp24/Gp25 is important for proper tail assembly. The protein is Tail assembly protein Gp24 (24) of Mycobacterium (Mycobacteriophage L5).